A 255-amino-acid chain; its full sequence is Triosephosphate isomerase (255 aa).

9–11 (NWK) contributes to the substrate binding site. The active-site Electrophile is the H95. The Proton acceptor role is filled by E167. Residues G173, S212, and 233-234 (GG) each bind substrate.

This sequence belongs to the triosephosphate isomerase family. As to quaternary structure, homodimer.

It localises to the cytoplasm. The catalysed reaction is D-glyceraldehyde 3-phosphate = dihydroxyacetone phosphate. It participates in carbohydrate biosynthesis; gluconeogenesis. Its pathway is carbohydrate degradation; glycolysis; D-glyceraldehyde 3-phosphate from glycerone phosphate: step 1/1. Involved in the gluconeogenesis. Catalyzes stereospecifically the conversion of dihydroxyacetone phosphate (DHAP) to D-glyceraldehyde-3-phosphate (G3P). In Salmonella dublin (strain CT_02021853), this protein is Triosephosphate isomerase.